Consider the following 523-residue polypeptide: La-related protein 1C (523 aa).

Over residues 1 to 16 (MASATSNNPASSSMSP) the composition is skewed to low complexity. Disordered regions lie at residues 1–52 (MASA…VRGE) and 95–313 (AAGD…VRHP). At Ala2 the chain carries N-acetylalanine. Residues 22-31 (NHGSPTASVA) are compositionally biased toward polar residues. Composition is skewed to low complexity over residues 32–44 (QSPR…VSSP) and 146–169 (SNKS…ASSS). Ser33 is modified (phosphoserine). Composition is skewed to polar residues over residues 206 to 270 (QRNG…NGNH) and 282 to 305 (HGNQ…SQRG). The region spanning 363 to 452 (HYQDPPLHMK…RDNWQNWVLR (90 aa)) is the HTH La-type RNA-binding domain. Positions 474-523 (GNLSVDQSSADPIGGSSSQLQPTEALSDDQQQSSSTAPVSNHNAPDGANR) are disordered. Polar residues predominate over residues 477-516 (SVDQSSADPIGGSSSQLQPTEALSDDQQQSSSTAPVSNHN).

This sequence belongs to the LARP family. As to expression, age-dependent accumulation in rosette leaves.

The protein resides in the cytoplasm. In terms of biological role, promotes leaf senescence mediated by abscisic acid (ABA), salicylic acid (SA) and jasmonic acid (MeJA), probably though the induction of expression of senescence-associated genes (SAGs) and defense-related genes. The polypeptide is La-related protein 1C (LARP1C) (Arabidopsis thaliana (Mouse-ear cress)).